The primary structure comprises 293 residues: Ribosomal RNA small subunit methyltransferase A (293 aa).

Residues N29, L31, G56, E77, D102, and N127 each coordinate S-adenosyl-L-methionine.

It belongs to the class I-like SAM-binding methyltransferase superfamily. rRNA adenine N(6)-methyltransferase family. RsmA subfamily.

It is found in the cytoplasm. The enzyme catalyses adenosine(1518)/adenosine(1519) in 16S rRNA + 4 S-adenosyl-L-methionine = N(6)-dimethyladenosine(1518)/N(6)-dimethyladenosine(1519) in 16S rRNA + 4 S-adenosyl-L-homocysteine + 4 H(+). Its function is as follows. Specifically dimethylates two adjacent adenosines (A1518 and A1519) in the loop of a conserved hairpin near the 3'-end of 16S rRNA in the 30S particle. May play a critical role in biogenesis of 30S subunits. This chain is Ribosomal RNA small subunit methyltransferase A, found in Lysinibacillus sphaericus (strain C3-41).